A 479-amino-acid chain; its full sequence is Alliin lyase (479 aa).

An N-terminal signal peptide occupies residues 1–25 (MESYDKVGSNKVPCLLILTCIIMSS). Residues 26 to 34 (FVNNNIVQA) constitute a propeptide that is removed on maturation. The EGF-like; atypical domain maps to 47 to 93 (EAVANINCSGHGRAFLDGILSDGSPKCECNTCYTGADCSEKITGCSA). Asn-53 carries N-linked (GlcNAc...) asparagine glycosylation. Intrachain disulfides connect Cys-54–Cys-73, Cys-75–Cys-84, and Cys-78–Cys-91. Residue 126 to 134 (YFFNPVSNF) coordinates chloride. N-linked (GlcNAc...) asparagine glycosylation is found at Asn-180 and Asn-225. At Lys-285 the chain carries N6-(pyridoxal phosphate)lysine. Residues Asn-342 and Asn-362 are each glycosylated (N-linked (GlcNAc...) asparagine). A disulfide bond links Cys-402 and Cys-410.

This sequence belongs to the alliinase family. Homodimer. Pyridoxal 5'-phosphate serves as cofactor.

It localises to the vacuole. The enzyme catalyses an S-alkyl-L-cysteine S-oxide = an S-alkyl sulfenate + 2-aminoprop-2-enoate. In Allium cepa (Onion), this protein is Alliin lyase.